The primary structure comprises 199 residues: dITP/XTP pyrophosphatase (199 aa).

Residue 9 to 14 (TGNKGK) participates in substrate binding. Mg(2+)-binding residues include E41 and D70. The active-site Proton acceptor is D70. Residues S71, 157–160 (FGYD), K180, and 185–186 (HR) each bind substrate.

It belongs to the HAM1 NTPase family. As to quaternary structure, homodimer. The cofactor is Mg(2+).

It catalyses the reaction XTP + H2O = XMP + diphosphate + H(+). The catalysed reaction is dITP + H2O = dIMP + diphosphate + H(+). It carries out the reaction ITP + H2O = IMP + diphosphate + H(+). Pyrophosphatase that catalyzes the hydrolysis of nucleoside triphosphates to their monophosphate derivatives, with a high preference for the non-canonical purine nucleotides XTP (xanthosine triphosphate), dITP (deoxyinosine triphosphate) and ITP. Seems to function as a house-cleaning enzyme that removes non-canonical purine nucleotides from the nucleotide pool, thus preventing their incorporation into DNA/RNA and avoiding chromosomal lesions. The polypeptide is dITP/XTP pyrophosphatase (Mannheimia succiniciproducens (strain KCTC 0769BP / MBEL55E)).